We begin with the raw amino-acid sequence, 109 residues long: Mannose-specific lectin (109 aa).

Positions 1-109 constitute a Bulb-type lectin domain; sequence DNILYSSEVL…PPIWATGTGR (109 aa). C29 and C52 are disulfide-bonded. Positions 79-82 are excised as a propeptide; the sequence is TGTN.

In terms of assembly, homotrimer or homotetramer.

It is found in the secreted. Its function is as follows. Mannose-specific lectin. Shows agglutinating activity toward rabbit erythrocytes and mitogenic activity towards mouse lymphocytes. The protein is Mannose-specific lectin of Aloe arborescens (Kidachi aloe).